Here is a 117-residue protein sequence, read N- to C-terminus: Large ribosomal subunit protein bL20 (117 aa).

This sequence belongs to the bacterial ribosomal protein bL20 family.

Binds directly to 23S ribosomal RNA and is necessary for the in vitro assembly process of the 50S ribosomal subunit. It is not involved in the protein synthesizing functions of that subunit. This is Large ribosomal subunit protein bL20 from Pelotomaculum thermopropionicum (strain DSM 13744 / JCM 10971 / SI).